Reading from the N-terminus, the 679-residue chain is UvrABC system protein B (679 aa).

The 388-residue stretch at 25–412 (EGVNQGQRYQ…DGHLAEQVIR (388 aa)) folds into the Helicase ATP-binding domain. ATP is bound at residue 38–45 (GATGTGKT). The short motif at 91-114 (YYDYYQPEAYVPVSDTYIAKTSSI) is the Beta-hairpin element. In terms of domain architecture, Helicase C-terminal spans 429-591 (QVDDLLAEIR…IVPRPAGKRA (163 aa)). Residues 639 to 674 (PELIDQLETKMKEAAKNLNFEEAASLRDRIKKFRQK) form the UVR domain.

Belongs to the UvrB family. In terms of assembly, forms a heterotetramer with UvrA during the search for lesions. Interacts with UvrC in an incision complex.

The protein resides in the cytoplasm. In terms of biological role, the UvrABC repair system catalyzes the recognition and processing of DNA lesions. A damage recognition complex composed of 2 UvrA and 2 UvrB subunits scans DNA for abnormalities. Upon binding of the UvrA(2)B(2) complex to a putative damaged site, the DNA wraps around one UvrB monomer. DNA wrap is dependent on ATP binding by UvrB and probably causes local melting of the DNA helix, facilitating insertion of UvrB beta-hairpin between the DNA strands. Then UvrB probes one DNA strand for the presence of a lesion. If a lesion is found the UvrA subunits dissociate and the UvrB-DNA preincision complex is formed. This complex is subsequently bound by UvrC and the second UvrB is released. If no lesion is found, the DNA wraps around the other UvrB subunit that will check the other stand for damage. This chain is UvrABC system protein B, found in Prochlorococcus marinus (strain MIT 9313).